The primary structure comprises 118 residues: Small ribosomal subunit protein uS13 (118 aa).

Residues 93 to 118 form a disordered region; that stretch reads RGLPVRGQRTKTNARTRKGPRKPIRK.

The protein belongs to the universal ribosomal protein uS13 family. Part of the 30S ribosomal subunit. Forms a loose heterodimer with protein S19. Forms two bridges to the 50S subunit in the 70S ribosome.

In terms of biological role, located at the top of the head of the 30S subunit, it contacts several helices of the 16S rRNA. In the 70S ribosome it contacts the 23S rRNA (bridge B1a) and protein L5 of the 50S subunit (bridge B1b), connecting the 2 subunits; these bridges are implicated in subunit movement. Contacts the tRNAs in the A and P-sites. The sequence is that of Small ribosomal subunit protein uS13 from Azotobacter vinelandii (strain DJ / ATCC BAA-1303).